Consider the following 98-residue polypeptide: Keratin-associated protein 3-1 (98 aa).

A2 is subject to N-acetylalanine. Tandem repeats lie at residues C3–R7, C8–R12, F47–S51, and Y55–D59. Residues C3–D59 are 4 X 5 AA repeats of C-C-X(3).

The protein belongs to the KRTAP type 3 family. In terms of assembly, interacts with wool keratins. As to expression, wool.

Functionally, in the wool cortex, wool keratin intermediate filaments are embedded in an interfilamentous matrix, consisting of hair keratin-associated proteins (KRTAP), which are essential for the formation of a rigid and resistant wool shaft through their extensive disulfide bond cross-linking with abundant cysteine residues of wool keratins. The matrix proteins include the high-sulfur and high-glycine-tyrosine keratins. The protein is Keratin-associated protein 3-1 (KRTAP3-1) of Capra hircus (Goat).